The sequence spans 189 residues: Interferon alpha-21 (189 aa).

Residues 1–23 (MALSFSLLMAVLVLSYKSICSLG) form the signal peptide. 2 cysteine pairs are disulfide-bonded: Cys-24–Cys-122 and Cys-52–Cys-162.

It belongs to the alpha/beta interferon family.

The protein localises to the secreted. Produced by macrophages, IFN-alpha have antiviral activities. Interferon stimulates the production of two enzymes: a protein kinase and an oligoadenylate synthetase. The chain is Interferon alpha-21 (IFNA21) from Homo sapiens (Human).